Consider the following 222-residue polypeptide: Adenylate kinase (222 aa).

An ATP-binding site is contributed by 10-15 (GAGKGT). Residues 30-59 (STGDMLRAAVKAGTPLGIEAKKVMDAGGLV) are NMP. AMP is bound by residues T31, R36, 57-59 (GLV), 85-88 (GFPR), and Q92. Residues 122 to 159 (GRRVHVASGRTYHVKYNPPKTEGVDDESGEPLIQRDDD) form an LID region. ATP contacts are provided by residues R123 and 132–133 (TY). The segment at 138 to 160 (NPPKTEGVDDESGEPLIQRDDDK) is disordered. AMP-binding residues include R156 and R167. An ATP-binding site is contributed by G207.

The protein belongs to the adenylate kinase family. Monomer.

It is found in the cytoplasm. The enzyme catalyses AMP + ATP = 2 ADP. The protein operates within purine metabolism; AMP biosynthesis via salvage pathway; AMP from ADP: step 1/1. Catalyzes the reversible transfer of the terminal phosphate group between ATP and AMP. Plays an important role in cellular energy homeostasis and in adenine nucleotide metabolism. The chain is Adenylate kinase from Ralstonia pickettii (strain 12J).